We begin with the raw amino-acid sequence, 111 residues long: Cell cycle protein GpsB (111 aa).

A coiled-coil region spans residues 38-72 (IKDYEAFHKEFDQLKQQNARLKRELEEQKVAATQV).

It belongs to the GpsB family. In terms of assembly, forms polymers through the coiled coil domains. Interacts with PBP1, MreC and EzrA.

Its subcellular location is the cytoplasm. Functionally, divisome component that associates with the complex late in its assembly, after the Z-ring is formed, and is dependent on DivIC and PBP2B for its recruitment to the divisome. Together with EzrA, is a key component of the system that regulates PBP1 localization during cell cycle progression. Its main role could be the removal of PBP1 from the cell pole after pole maturation is completed. Also contributes to the recruitment of PBP1 to the division complex. Not essential for septum formation. The polypeptide is Cell cycle protein GpsB (Bacillus mycoides (strain KBAB4) (Bacillus weihenstephanensis)).